The primary structure comprises 267 residues: WUSCHEL-related homeobox 8 (267 aa).

Positions 88–152 (TARQRWTPTP…NRRARSKRKQ (65 aa)) form a DNA-binding region, homeobox; WUS-type. The interval 148-195 (SKRKQAALPNNNAESEAEADEESPTDKKPKSDRPLHQNIAMRDHNSER) is disordered. Over residues 171–195 (PTDKKPKSDRPLHQNIAMRDHNSER) the composition is skewed to basic and acidic residues.

The protein belongs to the WUS homeobox family.

The protein localises to the nucleus. Functionally, transcription factor which may be involved in developmental processes. This is WUSCHEL-related homeobox 8 (WOX8) from Oryza sativa subsp. japonica (Rice).